A 327-amino-acid chain; its full sequence is Putative ABC transporter ATP-binding protein MM_0887 (327 aa).

The tract at residues 1 to 44 (MSKSTPLKSSIIRADLPEQAEGRTGPETGKDPEKTGNSEGKTDT) is disordered. The segment covering 28 to 44 (TGKDPEKTGNSEGKTDT) has biased composition (basic and acidic residues). An ABC transporter domain is found at 47–282 (IEIKDLCHRY…PALLRKAHLR (236 aa)). 81 to 88 (GANGAGKS) provides a ligand contact to ATP.

Belongs to the ABC transporter superfamily.

The protein resides in the cell membrane. Probably part of an ABC transporter complex. Responsible for energy coupling to the transport system. This Methanosarcina mazei (strain ATCC BAA-159 / DSM 3647 / Goe1 / Go1 / JCM 11833 / OCM 88) (Methanosarcina frisia) protein is Putative ABC transporter ATP-binding protein MM_0887.